The chain runs to 434 residues: Serine/threonine transporter SstT (434 aa).

The next 9 membrane-spanning stretches (helical) occupy residues isoleucine 14–isoleucine 34, phenylalanine 41–isoleucine 61, phenylalanine 72–alanine 92, alanine 135–leucine 155, threonine 172–leucine 192, leucine 210–valine 230, isoleucine 282–methionine 302, isoleucine 316–isoleucine 336, and phenylalanine 351–valine 371. A disordered region spans residues glycine 413 to valine 434.

This sequence belongs to the dicarboxylate/amino acid:cation symporter (DAACS) (TC 2.A.23) family.

The protein resides in the cell membrane. It catalyses the reaction L-serine(in) + Na(+)(in) = L-serine(out) + Na(+)(out). The catalysed reaction is L-threonine(in) + Na(+)(in) = L-threonine(out) + Na(+)(out). Involved in the import of serine and threonine into the cell, with the concomitant import of sodium (symport system). This is Serine/threonine transporter SstT from Lacticaseibacillus casei (strain BL23) (Lactobacillus casei).